A 335-amino-acid polypeptide reads, in one-letter code: UPF0353 protein MUL_1490 (335 aa).

The next 2 membrane-spanning stretches (helical) occupy residues 18-38 (WFFL…VLQL) and 67-87 (IPAM…AGPT). Positions 98–298 (VVMLVIDVSQ…SVYVSLQQQI (201 aa)) constitute a VWFA domain. A helical membrane pass occupies residues 309–329 (MGWLRLGALVLVAAALAALLI).

Belongs to the UPF0353 family.

It is found in the cell membrane. This Mycobacterium ulcerans (strain Agy99) protein is UPF0353 protein MUL_1490.